Here is a 117-residue protein sequence, read N- to C-terminus: Ribonuclease P protein component (117 aa).

This sequence belongs to the RnpA family. Consists of a catalytic RNA component (M1 or rnpB) and a protein subunit.

It catalyses the reaction Endonucleolytic cleavage of RNA, removing 5'-extranucleotides from tRNA precursor.. RNaseP catalyzes the removal of the 5'-leader sequence from pre-tRNA to produce the mature 5'-terminus. It can also cleave other RNA substrates such as 4.5S RNA. The protein component plays an auxiliary but essential role in vivo by binding to the 5'-leader sequence and broadening the substrate specificity of the ribozyme. This is Ribonuclease P protein component from Aliivibrio fischeri (strain ATCC 700601 / ES114) (Vibrio fischeri).